Reading from the N-terminus, the 338-residue chain is Aspartate-semialdehyde dehydrogenase (338 aa).

NADP(+) contacts are provided by residues 9-12 (TGQV) and 37-38 (RS). Arg93 serves as a coordination point for phosphate. The Acyl-thioester intermediate role is filled by Cys123. Residue Gln150 coordinates substrate. 153–154 (SG) contacts NADP(+). Phosphate is bound at residue Lys220. Arg242 contributes to the substrate binding site. The Proton acceptor role is filled by His249. Position 316 (Asn316) interacts with NADP(+).

Belongs to the aspartate-semialdehyde dehydrogenase family. Homodimer.

The catalysed reaction is L-aspartate 4-semialdehyde + phosphate + NADP(+) = 4-phospho-L-aspartate + NADPH + H(+). It participates in amino-acid biosynthesis; L-lysine biosynthesis via DAP pathway; (S)-tetrahydrodipicolinate from L-aspartate: step 2/4. The protein operates within amino-acid biosynthesis; L-methionine biosynthesis via de novo pathway; L-homoserine from L-aspartate: step 2/3. Its pathway is amino-acid biosynthesis; L-threonine biosynthesis; L-threonine from L-aspartate: step 2/5. Its function is as follows. Catalyzes the NADPH-dependent formation of L-aspartate-semialdehyde (L-ASA) by the reductive dephosphorylation of L-aspartyl-4-phosphate. The protein is Aspartate-semialdehyde dehydrogenase of Streptomyces akiyoshiensis.